A 207-amino-acid polypeptide reads, in one-letter code: Large ribosomal subunit protein uL4 (207 aa).

The segment at 49–78 is disordered; that stretch reads HAVKNRSAVSGGGRKPWRQKGTGRARQGSI.

The protein belongs to the universal ribosomal protein uL4 family. In terms of assembly, part of the 50S ribosomal subunit.

Its function is as follows. One of the primary rRNA binding proteins, this protein initially binds near the 5'-end of the 23S rRNA. It is important during the early stages of 50S assembly. It makes multiple contacts with different domains of the 23S rRNA in the assembled 50S subunit and ribosome. Functionally, forms part of the polypeptide exit tunnel. This is Large ribosomal subunit protein uL4 from Streptococcus thermophilus (strain CNRZ 1066).